A 288-amino-acid polypeptide reads, in one-letter code: Ribosomal RNA small subunit methyltransferase A (288 aa).

S-adenosyl-L-methionine contacts are provided by Asn-37, Leu-39, Gly-64, Glu-86, Asp-112, and Asn-131.

Belongs to the class I-like SAM-binding methyltransferase superfamily. rRNA adenine N(6)-methyltransferase family. RsmA subfamily.

It is found in the cytoplasm. The catalysed reaction is adenosine(1518)/adenosine(1519) in 16S rRNA + 4 S-adenosyl-L-methionine = N(6)-dimethyladenosine(1518)/N(6)-dimethyladenosine(1519) in 16S rRNA + 4 S-adenosyl-L-homocysteine + 4 H(+). Its function is as follows. Specifically dimethylates two adjacent adenosines (A1518 and A1519) in the loop of a conserved hairpin near the 3'-end of 16S rRNA in the 30S particle. May play a critical role in biogenesis of 30S subunits. In Rhodospirillum rubrum (strain ATCC 11170 / ATH 1.1.1 / DSM 467 / LMG 4362 / NCIMB 8255 / S1), this protein is Ribosomal RNA small subunit methyltransferase A.